Reading from the N-terminus, the 612-residue chain is uncharacterized protein (612 aa).

The J domain occupies 8-75 (ELYLALGLPK…SKKEIYDNFG (68 aa)). Residues 445–465 (AVFWGLVFPITSILGVEQFFL) traverse the membrane as a helical segment.

This sequence belongs to the DnaJ family.

The protein localises to the membrane. This is an uncharacterized protein from Schizosaccharomyces pombe (strain 972 / ATCC 24843) (Fission yeast).